The following is a 177-amino-acid chain: ATP synthase subunit delta (177 aa).

The protein belongs to the ATPase delta chain family. As to quaternary structure, F-type ATPases have 2 components, F(1) - the catalytic core - and F(0) - the membrane proton channel. F(1) has five subunits: alpha(3), beta(3), gamma(1), delta(1), epsilon(1). F(0) has three main subunits: a(1), b(2) and c(10-14). The alpha and beta chains form an alternating ring which encloses part of the gamma chain. F(1) is attached to F(0) by a central stalk formed by the gamma and epsilon chains, while a peripheral stalk is formed by the delta and b chains.

It localises to the cell inner membrane. In terms of biological role, f(1)F(0) ATP synthase produces ATP from ADP in the presence of a proton or sodium gradient. F-type ATPases consist of two structural domains, F(1) containing the extramembraneous catalytic core and F(0) containing the membrane proton channel, linked together by a central stalk and a peripheral stalk. During catalysis, ATP synthesis in the catalytic domain of F(1) is coupled via a rotary mechanism of the central stalk subunits to proton translocation. Functionally, this protein is part of the stalk that links CF(0) to CF(1). It either transmits conformational changes from CF(0) to CF(1) or is implicated in proton conduction. The sequence is that of ATP synthase subunit delta from Pseudoalteromonas translucida (strain TAC 125).